The chain runs to 132 residues: Translation initiation factor 5A (132 aa).

K36 is modified (hypusine).

It belongs to the eIF-5A family.

Its subcellular location is the cytoplasm. Functionally, functions by promoting the formation of the first peptide bond. This is Translation initiation factor 5A (eIF5A) from Desulfurococcus amylolyticus (strain DSM 18924 / JCM 16383 / VKM B-2413 / 1221n) (Desulfurococcus kamchatkensis).